We begin with the raw amino-acid sequence, 403 residues long: Phosphopentomutase (403 aa).

Residues D13, D298, H303, D339, H340, and H351 each contribute to the Mn(2+) site.

It belongs to the phosphopentomutase family. Mn(2+) serves as cofactor.

Its subcellular location is the cytoplasm. The enzyme catalyses 2-deoxy-alpha-D-ribose 1-phosphate = 2-deoxy-D-ribose 5-phosphate. The catalysed reaction is alpha-D-ribose 1-phosphate = D-ribose 5-phosphate. Its pathway is carbohydrate degradation; 2-deoxy-D-ribose 1-phosphate degradation; D-glyceraldehyde 3-phosphate and acetaldehyde from 2-deoxy-alpha-D-ribose 1-phosphate: step 1/2. Its function is as follows. Isomerase that catalyzes the conversion of deoxy-ribose 1-phosphate (dRib-1-P) and ribose 1-phosphate (Rib-1-P) to deoxy-ribose 5-phosphate (dRib-5-P) and ribose 5-phosphate (Rib-5-P), respectively. In Streptococcus pyogenes serotype M5 (strain Manfredo), this protein is Phosphopentomutase.